The sequence spans 80 residues: Conotoxin Cl10.1 (80 aa).

The signal sequence occupies residues 1–20 (MTTLGMTMLVLLLLLPLATC). The propeptide occupies 21–36 (LGDGERSPWDSLLRAL).

Contains 4 disulfide bonds. In terms of tissue distribution, expressed by the venom duct.

The protein localises to the secreted. The sequence is that of Conotoxin Cl10.1 from Californiconus californicus (California cone).